A 133-amino-acid polypeptide reads, in one-letter code: Phosphoribosyl-AMP cyclohydrolase (133 aa).

Residue Asp77 coordinates Mg(2+). A Zn(2+)-binding site is contributed by Cys78. The Mg(2+) site is built by Asp79 and Asp81. Positions 95 and 102 each coordinate Zn(2+).

Belongs to the PRA-CH family. In terms of assembly, homodimer. It depends on Mg(2+) as a cofactor. Zn(2+) serves as cofactor.

The protein resides in the cytoplasm. The enzyme catalyses 1-(5-phospho-beta-D-ribosyl)-5'-AMP + H2O = 1-(5-phospho-beta-D-ribosyl)-5-[(5-phospho-beta-D-ribosylamino)methylideneamino]imidazole-4-carboxamide. Its pathway is amino-acid biosynthesis; L-histidine biosynthesis; L-histidine from 5-phospho-alpha-D-ribose 1-diphosphate: step 3/9. Functionally, catalyzes the hydrolysis of the adenine ring of phosphoribosyl-AMP. This is Phosphoribosyl-AMP cyclohydrolase from Thiobacillus denitrificans (strain ATCC 25259 / T1).